The sequence spans 146 residues: Transcriptional regulator MraZ (146 aa).

2 SpoVT-AbrB domains span residues 4 to 46 and 75 to 118; these read TVFR…SQTE and TVKV…PEQR.

Belongs to the MraZ family. In terms of assembly, forms oligomers.

It localises to the cytoplasm. The protein localises to the nucleoid. This is Transcriptional regulator MraZ from Mesomycoplasma hyopneumoniae (strain 232) (Mycoplasma hyopneumoniae).